The chain runs to 283 residues: Cyclin-C (283 aa).

In terms of domain architecture, Cyclin N-terminal spans 46 to 144 (NVIQALGEHL…ILECEFYLLE (99 aa)). Residues 252–283 (TILSKMPKPKPPPNSEGEQGPNGSQNSSYSQS) form a disordered region. Polar residues predominate over residues 272–283 (PNGSQNSSYSQS).

This sequence belongs to the cyclin family. Cyclin C subfamily. In terms of assembly, component of the Mediator complex. The cylin/CDK pair formed by CCNC/CDK8 also associates with the large subunit of RNA polymerase II.

It localises to the nucleus. In terms of biological role, component of the Mediator complex, a coactivator involved in regulated gene transcription of nearly all RNA polymerase II-dependent genes. Mediator functions as a bridge to convey information from gene-specific regulatory proteins to the basal RNA polymerase II transcription machinery. Mediator is recruited to promoters by direct interactions with regulatory proteins and serves as a scaffold for the assembly of a functional preinitiation complex with RNA polymerase II and the general transcription factors. Binds to and activates cyclin-dependent kinase CDK8 that phosphorylates the CTD (C-terminal domain) of the large subunit of RNA polymerase II (RNAp II), which may inhibit the formation of a transcription initiation complex. The polypeptide is Cyclin-C (CCNC) (Gallus gallus (Chicken)).